Here is a 618-residue protein sequence, read N- to C-terminus: Glucose starvation modulator protein 1 (618 aa).

Positions 20-48 (CEFCHTKHIQCDVGRPCQNCLKRNIGKFC) form a DNA-binding region, zn(2)-C6 fungal-type. Positions 325 to 352 (ANANTHPSHNAKLESECDSSSHSDADLE) are disordered. Basic and acidic residues predominate over residues 335–352 (AKLESECDSSSHSDADLE). One can recognise a PAS domain in the interval 466-538 (LLDLENMAKL…QIFNELLAFG (73 aa)).

The protein belongs to the ERT1/acuK family.

Its subcellular location is the nucleus. Transcription factor which regulates nonfermentable carbon utilization. Binds specifically to 5'-CGGN(8)CGG-3' and 5'-CGGN(9)CGG-3' sequences in the promoter region. The polypeptide is Glucose starvation modulator protein 1 (GSM1) (Saccharomyces cerevisiae (strain ATCC 204508 / S288c) (Baker's yeast)).